Consider the following 3996-residue polypeptide: Probable E3 ubiquitin-protein ligase HECTD4 (3996 aa).

Residues 282 to 302 form a helical membrane-spanning segment; the sequence is TCIIRCILVVFQVVFKFFFSP. Polar residues predominate over residues 1494 to 1510; it reads PTASEPDTTLTKTSPKN. 2 disordered regions span residues 1494–1524 and 1616–1637; these read PTAS…ESEA and PETV…SICR. The residue at position 2080 (Thr2080) is a Phosphothreonine. Disordered stretches follow at residues 2219–2245, 2859–2919, 3017–3053, and 3327–3403; these read FITS…DDIP, TSAT…PTVL, EDTK…STSS, and FDKS…QEVP. Over residues 2232–2245 the composition is skewed to acidic residues; that stretch reads ADDESDDDDDDDIP. The segment covering 2866-2887 has biased composition (low complexity); the sequence is LSDSSSSSSSSPGQTPQSPSLL. Over residues 2888–2897 the composition is skewed to basic residues; the sequence is SKRKKVKMKR. 3 stretches are compositionally biased toward basic and acidic residues: residues 3017–3037, 3327–3341, and 3370–3403; these read EDTK…EPEK, FDKS…EQHP, and LSEK…QEVP. Residues 3627–3996 enclose the HECT domain; that stretch reads SGGDPTYAFN…IHYREDPLSG (370 aa). Catalysis depends on Cys3964, which acts as the Glycyl thioester intermediate.

It localises to the membrane. The enzyme catalyses S-ubiquitinyl-[E2 ubiquitin-conjugating enzyme]-L-cysteine + [acceptor protein]-L-lysine = [E2 ubiquitin-conjugating enzyme]-L-cysteine + N(6)-ubiquitinyl-[acceptor protein]-L-lysine.. It participates in protein modification; protein ubiquitination. E3 ubiquitin-protein ligase which accepts ubiquitin from an E2 ubiquitin-conjugating enzyme in the form of a thioester and then directly transfers the ubiquitin to targeted substrates. This is Probable E3 ubiquitin-protein ligase HECTD4 (HECTD4) from Homo sapiens (Human).